Consider the following 89-residue polypeptide: uncharacterized protein (89 aa).

This is an uncharacterized protein from Vaccinia virus (strain Copenhagen) (VACV).